Reading from the N-terminus, the 141-residue chain is Large ribosomal subunit protein uL11 (141 aa).

This sequence belongs to the universal ribosomal protein uL11 family. In terms of assembly, part of the ribosomal stalk of the 50S ribosomal subunit. Interacts with L10 and the large rRNA to form the base of the stalk. L10 forms an elongated spine to which L12 dimers bind in a sequential fashion forming a multimeric L10(L12)X complex. In terms of processing, one or more lysine residues are methylated.

Forms part of the ribosomal stalk which helps the ribosome interact with GTP-bound translation factors. The protein is Large ribosomal subunit protein uL11 of Lactobacillus delbrueckii subsp. bulgaricus (strain ATCC 11842 / DSM 20081 / BCRC 10696 / JCM 1002 / NBRC 13953 / NCIMB 11778 / NCTC 12712 / WDCM 00102 / Lb 14).